Reading from the N-terminus, the 396-residue chain is Pre-mycofactocin synthase (396 aa).

The FMN hydroxy acid dehydrogenase domain occupies 1-383; the sequence is MAEAWFETVA…SPADILVPTG (383 aa). Positions 108, 128, 156, and 254 each coordinate FMN. Histidine 278 serves as the catalytic Proton acceptor. FMN-binding positions include 309 to 313 and 332 to 333; these read DGGIR and GR.

It belongs to the FMN-dependent alpha-hydroxy acid dehydrogenase family. FMN is required as a cofactor.

The enzyme catalyses 3-amino-5-[(4-hydroxyphenyl)methyl]-4,4-dimethyl-2-pyrrolidin-2-one + O2 + H2O = pre-mycofactocin + H2O2 + NH4(+). In terms of biological role, involved in the biosynthesis of the enzyme cofactor mycofactocin (MFT). Catalyzes the oxidative deamination of AHDP (3-amino-5-[(4-hydroxyphenyl)methyl]-4,4-dimethyl-2-pyrrolidin-2-one), forming an alpha-keto amide moiety on the resulting molecule, which is called pre-mycofactocin (PMFT). This reaction occurs via a 5-[(4-hydroxyphenyl)methyl]-3-imino-4,4-dimethylpyrrolidin-2-one intermediate, which converts to PMFT. The alpha-keto amide moiety is the redox-active center for the redox activity of mycofactocin. In Mycobacterium tuberculosis (strain CDC 1551 / Oshkosh), this protein is Pre-mycofactocin synthase (mftD).